The primary structure comprises 653 residues: Modification methylase StsI (653 aa).

Belongs to the N(4)/N(6)-methyltransferase family. Monomer.

It carries out the reaction a 2'-deoxyadenosine in DNA + S-adenosyl-L-methionine = an N(6)-methyl-2'-deoxyadenosine in DNA + S-adenosyl-L-homocysteine + H(+). In terms of biological role, an alpha subtype methylase that recognizes the double-stranded sequence 5'-GGATG-3' in one strand and 3'-CATCC-5' in the other, methylates A of both strands, and protects the DNA from cleavage by the StsI endonuclease. The 2 domains of the protein participate in modification of the two strands. The sequence is that of Modification methylase StsI (stsIM) from Streptococcus sanguinis.